Here is a 275-residue protein sequence, read N- to C-terminus: Elongation factor Ts (275 aa).

The interval 76–79 (TDFV) is involved in Mg(2+) ion dislocation from EF-Tu.

The protein belongs to the EF-Ts family.

The protein resides in the cytoplasm. Its function is as follows. Associates with the EF-Tu.GDP complex and induces the exchange of GDP to GTP. It remains bound to the aminoacyl-tRNA.EF-Tu.GTP complex up to the GTP hydrolysis stage on the ribosome. The sequence is that of Elongation factor Ts from Salinispora tropica (strain ATCC BAA-916 / DSM 44818 / JCM 13857 / NBRC 105044 / CNB-440).